A 1242-amino-acid chain; its full sequence is DNA-directed RNA polymerase RPB2 homolog (1242 aa).

A C4-type zinc finger spans residues 1180–1201 (CRNCGEPAIYNASHPIYKCMNC).

The protein belongs to the RNA polymerase beta chain family. As to quaternary structure, part of the viral DNA-directed RNA polymerase that consists of 8 polII-like subunits (RPB1, RPB2, RPB3, RPB5, RPB6, RPB7, RPB9, RPB10), a capping enzyme and a termination factor.

It localises to the host cytoplasm. It is found in the virion. The enzyme catalyses RNA(n) + a ribonucleoside 5'-triphosphate = RNA(n+1) + diphosphate. Its function is as follows. Catalytic component of the DNA-directed RNA polymerase (RNAP) that catalyzes the transcription in the cytoplasm of viral DNA into RNA using the four ribonucleoside triphosphates as substrates. Forms the polymerase active center together with RPB1. Part of the core element with the central large cleft, the clamp element that moves to open and close the cleft and the jaws that are thought to grab the incoming DNA template. The protein is DNA-directed RNA polymerase RPB2 homolog of Ornithodoros (relapsing fever ticks).